A 246-amino-acid chain; its full sequence is MAGHSKWANTKHRKAAQDAKRGKIFTKIIRELVTAARLGGGDPGSNPRLRAAIDKALSNNMTRDTLNRAIARGVGGDEDANMETIIYEGYGPGGTAVMVECLSDNRNRTVAEVRHAFSKCGGNLGTDGSVAYLFSKKGVISFEAGDEDTIMEAALEAGAEDVVTYDDGAIDVYTAWEEMGAVRDALEAAGLKADNAEVSMIPSTKADMDAETAPKLLRLIDMLEDCDDVQEVYHNGEISDEVAATL.

This sequence belongs to the TACO1 family.

The protein localises to the cytoplasm. This Cronobacter sakazakii (strain ATCC BAA-894) (Enterobacter sakazakii) protein is Probable transcriptional regulatory protein ESA_01378.